The following is a 225-amino-acid chain: Uracil-DNA glycosylase (225 aa).

The active-site Proton acceptor is D65.

The protein belongs to the uracil-DNA glycosylase (UDG) superfamily. UNG family.

The protein resides in the cytoplasm. It catalyses the reaction Hydrolyzes single-stranded DNA or mismatched double-stranded DNA and polynucleotides, releasing free uracil.. In terms of biological role, excises uracil residues from the DNA which can arise as a result of misincorporation of dUMP residues by DNA polymerase or due to deamination of cytosine. The protein is Uracil-DNA glycosylase of Bacillus cereus (strain ZK / E33L).